We begin with the raw amino-acid sequence, 119 residues long: Small ribosomal subunit protein bS16 (119 aa).

Residues 81–119 are disordered; sequence GLAKRPARNNPKKAEPGQKAKERAAARAEKAGAGDDAAA. A compositionally biased stretch (basic and acidic residues) spans 92-113; that stretch reads KKAEPGQKAKERAAARAEKAGA.

It belongs to the bacterial ribosomal protein bS16 family.

In Methylobacterium sp. (strain 4-46), this protein is Small ribosomal subunit protein bS16.